The following is a 1296-amino-acid chain: Phosphoribosylformylglycinamidine synthase (1296 aa).

The tract at residues 300–325 (APFSGAATGSGGEIRDEGATGRGSKP) is disordered. ATP is bound by residues 304–315 (GAATGSGGEIRD) and Ala675. Mg(2+) contacts are provided by Glu715, Asn719, and Asp885. Ser887 contacts ATP. Positions 1043-1296 (MAILREQGVN…MFRNARKNVG (254 aa)) constitute a Glutamine amidotransferase type-1 domain. Catalysis depends on Cys1136, which acts as the Nucleophile. The interval 1232 to 1253 (TQYPANPNGSPEGITGITSTDG) is disordered. Catalysis depends on residues His1261 and Glu1263.

The protein in the N-terminal section; belongs to the FGAMS family. In terms of assembly, monomer.

Its subcellular location is the cytoplasm. The enzyme catalyses N(2)-formyl-N(1)-(5-phospho-beta-D-ribosyl)glycinamide + L-glutamine + ATP + H2O = 2-formamido-N(1)-(5-O-phospho-beta-D-ribosyl)acetamidine + L-glutamate + ADP + phosphate + H(+). It participates in purine metabolism; IMP biosynthesis via de novo pathway; 5-amino-1-(5-phospho-D-ribosyl)imidazole from N(2)-formyl-N(1)-(5-phospho-D-ribosyl)glycinamide: step 1/2. Phosphoribosylformylglycinamidine synthase involved in the purines biosynthetic pathway. Catalyzes the ATP-dependent conversion of formylglycinamide ribonucleotide (FGAR) and glutamine to yield formylglycinamidine ribonucleotide (FGAM) and glutamate. The protein is Phosphoribosylformylglycinamidine synthase of Pseudoalteromonas translucida (strain TAC 125).